A 799-amino-acid chain; its full sequence is Conserved oligomeric Golgi complex subunit 6 (799 aa).

Belongs to the COG6 family.

The protein resides in the golgi apparatus membrane. Functionally, acts as a component of the peripheral membrane COG complex that is involved in intra-Golgi protein trafficking. COG is located at the cis-Golgi, and regulates tethering of retrograde intra-Golgi vesicles and possibly a number of other membrane trafficking events. The sequence is that of Conserved oligomeric Golgi complex subunit 6 (COG6) from Scheffersomyces stipitis (strain ATCC 58785 / CBS 6054 / NBRC 10063 / NRRL Y-11545) (Yeast).